Reading from the N-terminus, the 184-residue chain is Transcription termination/antitermination protein NusG (184 aa).

This sequence belongs to the NusG family.

In terms of biological role, participates in transcription elongation, termination and antitermination. The protein is Transcription termination/antitermination protein NusG of Borreliella burgdorferi (strain ATCC 35210 / DSM 4680 / CIP 102532 / B31) (Borrelia burgdorferi).